A 325-amino-acid chain; its full sequence is Flotillin-like protein FloA (325 aa).

2 helical membrane passes run 4-24 (LGIVFLAAVVLLFVFLFFSFI) and 26-46 (VGLWISAWAAGVRVPLLTLVA).

It belongs to the flotillin-like FloA family. In terms of assembly, homooligomerizes.

Its subcellular location is the cell membrane. It is found in the membrane raft. Functionally, found in functional membrane microdomains (FMM) that may be equivalent to eukaryotic membrane rafts. FMMs are highly dynamic and increase in number as cells age. Flotillins are thought to be important factors in membrane fluidity. In Thermus thermophilus (strain ATCC BAA-163 / DSM 7039 / HB27), this protein is Flotillin-like protein FloA.